A 178-amino-acid polypeptide reads, in one-letter code: PRA1 family protein 2 (178 aa).

At 1 to 41 (MSEVRLPPLRALDDFVLGSARLAAPDPGDPQRWCHRVINNL) the chain is on the cytoplasmic side. A helical transmembrane segment spans residues 42–62 (LYYQTNYLLCFGISLALAGYI). The Extracellular portion of the chain corresponds to 63–64 (RP). Residues 65 to 85 (LHTLLSALVVVVALGVLVWAA) form a helical membrane-spanning segment. Residues 86–96 (ETRAAVRRCRR) lie on the Cytoplasmic side of the membrane. Residues 97–119 (SHPAACLAAVLAISLFILWAVGG) form a helical membrane-spanning segment. Topologically, residues 120 to 122 (AFT) are extracellular. Residues 123–140 (FLLSITAPVFLILLHASL) traverse the membrane as a helical segment. Residues 141–178 (RLRNLKNKIENKIESIGLKRTPMGLLLEALGQEQEAGS) are Cytoplasmic-facing.

Belongs to the PRA1 family. In terms of assembly, interacts with CCR5 and GDE1.

It is found in the endosome membrane. Functionally, may be involved in ER/Golgi transport and vesicular traffic. Plays a proapoptotic role in cerulenin-induced neuroblastoma apoptosis. In Mus musculus (Mouse), this protein is PRA1 family protein 2 (Praf2).